A 333-amino-acid chain; its full sequence is Large ribosomal subunit protein mL44 (333 aa).

The transit peptide at 1-30 (MASAVFRLLQQGPRRLLAPAVPTLAPPVRG) directs the protein to the mitochondrion. Residues 86–228 (DLLKTAFINS…LITQMTGKEL (143 aa)) enclose the RNase III domain. A DRBM domain is found at 236-306 (NPMGLLVEEL…ARVALRKLYG (71 aa)). Residues 311-327 (RRPWDYSKPKESPKRAE) are compositionally biased toward basic and acidic residues. A disordered region spans residues 311 to 333 (RRPWDYSKPKESPKRAEQTSVAS).

Belongs to the ribonuclease III family. Mitochondrion-specific ribosomal protein mL44 subfamily. Component of the mitochondrial ribosome large subunit (39S) which comprises a 16S rRNA and about 50 distinct proteins.

It localises to the mitochondrion. Its function is as follows. Component of the 39S subunit of mitochondrial ribosome. May have a function in the assembly/stability of nascent mitochondrial polypeptides exiting the ribosome. The chain is Large ribosomal subunit protein mL44 (Mrpl44) from Mus musculus (Mouse).